The following is a 284-amino-acid chain: MNKQQLKAYFMLMRLHRPIPILLILWPTLTALVLASHGLPDISYLVIFTIGVVVMRTVGCIINDIADVDFDKHVARTNTRPLTSGQLSIKNAIWLCISLTLVAFICVLFLNLYTILLSFVALFLAILYPFCKRFFAIPQLILGLAFNFGIFMAFSAIQNQIPVEAWIFYIATICWTIAYDTIYALADREFDLEIGIKSSAVLFGNKVFRYILLFNFLSLLLLIILGIYCDFNSFFYLGVVICSLFFVRNYFLYKKLGITNCINAFSANHWIGLIIFIIAVIQYI.

A run of 9 helical transmembrane segments spans residues 19–39 (IPIL…SHGL), 42–62 (ISYL…GCII), 85–105 (GQLS…VAFI), 107–127 (VLFL…LAIL), 134–154 (FFAI…FMAF), 165–185 (AWIF…IYAL), 211–231 (ILLF…YCDF), 233–253 (SFFY…YFLY), and 261–281 (CINA…IAVI).

Belongs to the UbiA prenyltransferase family. The cofactor is Mg(2+).

The protein resides in the cell inner membrane. The catalysed reaction is all-trans-octaprenyl diphosphate + 4-hydroxybenzoate = 4-hydroxy-3-(all-trans-octaprenyl)benzoate + diphosphate. Its pathway is cofactor biosynthesis; ubiquinone biosynthesis. In terms of biological role, catalyzes the prenylation of para-hydroxybenzoate (PHB) with an all-trans polyprenyl group. Mediates the second step in the final reaction sequence of ubiquinone-8 (UQ-8) biosynthesis, which is the condensation of the polyisoprenoid side chain with PHB, generating the first membrane-bound Q intermediate 3-octaprenyl-4-hydroxybenzoate. The chain is 4-hydroxybenzoate octaprenyltransferase from Francisella tularensis subsp. holarctica (strain LVS).